The following is a 370-amino-acid chain: Zinc finger protein 830 (370 aa).

Disordered stretches follow at residues 1-21 (MASS…QEEL) and 75-220 (HRER…LVPH). Ala-2 carries the N-acetylalanine modification. A coiled-coil region spans residues 16–40 (VNQEELRRLMKEKQRLSTNRKRIES). A C2H2-type zinc finger spans residues 53–75 (CALCNTPVKSELLWQTHVLGKQH). The segment covering 90-99 (QGPSAGTAPQ) has biased composition (polar residues). Basic and acidic residues predominate over residues 104–115 (KTTDVESQDAKK). The span at 121-134 (DQVQPSTSASSANF) shows a compositional bias: polar residues. Residues 156 to 171 (DYEEEEEEEEEEELGG) are compositionally biased toward acidic residues. Residues 172-191 (GEERRDSSKHLPDAQGREHS) are compositionally biased toward basic and acidic residues. Polar residues predominate over residues 196 to 212 (RETTSNVLPNDPFNTNP). At Ser-223 the chain carries Phosphoserine. Positions 310-338 (IECYRRVEKLRNRQDEIKNKLKEVLTIKE) form a coiled coil. A phosphoserine mark is found at Ser-349 and Ser-360.

As to quaternary structure, component of the XAB2 complex, a multimeric protein complex composed of XAB2, PRPF19, AQR, ZNF830, ISY1, and PPIE; this complex binds preferentially to RNA. Interacts with XAB2. Identified in a pentameric intron-binding (IB) complex composed of AQR, XAB2, ISY1, ZNF830 and PPIE that is incorporated into the spliceosome as a preassembled complex. The IB complex does not contain PRPF19. Post-translationally, phosphorylated in response to DNA damage by the cell cycle checkpoint kinases ATR/ATM.

The protein localises to the nucleus. Its subcellular location is the chromosome. It is found in the nucleus speckle. In terms of biological role, may play a role in pre-mRNA splicing as component of the spliceosome. Acts as an important regulator of the cell cycle that participates in the maintenance of genome integrity. During cell cycle progression in embryonic fibroblast, prevents replication fork collapse, double-strand break formation and cell cycle checkpoint activation. Controls mitotic cell cycle progression and cell survival in rapidly proliferating intestinal epithelium and embryonic stem cells. During the embryo preimplantation, controls different aspects of M phase. During early oocyte growth, plays a role in oocyte survival by preventing chromosomal breaks formation, activation of TP63 and reduction of transcription. This is Zinc finger protein 830 from Rattus norvegicus (Rat).